Consider the following 582-residue polypeptide: Inositol transporter 4 (582 aa).

12 helical membrane-spanning segments follow: residues 35-55 (GIGGLLFGYDTGVISGALLFI), 70-90 (STIVSMAVAGAIVGAAVGGWI), 105-125 (VLFLIGAIVMAFAPAPWVIIV), 128-148 (IFVGFGVGMASMTSPLYISEA), 162-182 (GLLITGGQFFSYLINLAFVHT), 188-208 (WMLGVAGVPAIVQFVLMLSLP), 290-310 (FVGINTVMYYSPSIVQFAGYA), 317-337 (ALSLITSGLNALGSIVSMMFV), 345-365 (LMIISMFGIIACLIILATVFS), 456-476 (FGFLAIVFLGLYIVVYAPGMG), 494-514 (LGGGIAAVSNWVSNLIVSESF), and 525-545 (GTFLLFAGFSTIGLFFIWLLV).

Belongs to the major facilitator superfamily. Sugar transporter (TC 2.A.1.1) family. As to expression, highly expressed in pollen and phloem companion cells.

The protein localises to the cell membrane. In terms of biological role, plasma membrane inositol-proton symporter. Mediates high-affinity myoinositol-proton symport across the plasma membrane. Active with myoinositol, scylloinositol and D-chiroinositol. Low activity with mucoinositol and alloinositol. The sequence is that of Inositol transporter 4 (INT4) from Arabidopsis thaliana (Mouse-ear cress).